The sequence spans 634 residues: Chaperone protein DnaK (634 aa).

Position 198 is a phosphothreonine; by autocatalysis (threonine 198). The disordered stretch occupies residues 599–634 (KQTQEGAEAASEAGEQSAGDEGVVDAEFEEVDEQNK). Positions 602-619 (QEGAEAASEAGEQSAGDE) are enriched in low complexity. The segment covering 620 to 634 (GVVDAEFEEVDEQNK) has biased composition (acidic residues).

The protein belongs to the heat shock protein 70 family.

Its function is as follows. Acts as a chaperone. This is Chaperone protein DnaK from Syntrophotalea carbinolica (strain DSM 2380 / NBRC 103641 / GraBd1) (Pelobacter carbinolicus).